A 342-amino-acid polypeptide reads, in one-letter code: S-adenosylmethionine:tRNA ribosyltransferase-isomerase (342 aa).

This sequence belongs to the QueA family. Monomer.

It is found in the cytoplasm. It catalyses the reaction 7-aminomethyl-7-carbaguanosine(34) in tRNA + S-adenosyl-L-methionine = epoxyqueuosine(34) in tRNA + adenine + L-methionine + 2 H(+). It functions in the pathway tRNA modification; tRNA-queuosine biosynthesis. Transfers and isomerizes the ribose moiety from AdoMet to the 7-aminomethyl group of 7-deazaguanine (preQ1-tRNA) to give epoxyqueuosine (oQ-tRNA). The chain is S-adenosylmethionine:tRNA ribosyltransferase-isomerase from Campylobacter jejuni subsp. jejuni serotype O:6 (strain 81116 / NCTC 11828).